The sequence spans 292 residues: AKT-interacting protein (292 aa).

The disordered stretch occupies residues 1-64 (MNPFWNMSSA…ISPSPSVQPT (64 aa)). Over residues 14 to 23 (KRSDNDEKIA) the composition is skewed to basic and acidic residues. The region spanning 75–223 (YLEYSLLAEF…VVDSVKLCNS (149 aa)) is the UBC core domain. The interval 273-292 (SWVKPGSVLPFSKEENSLQT) is disordered.

It belongs to the ubiquitin-conjugating enzyme family. FTS subfamily.

It is found in the cytoplasm. The protein resides in the cell membrane. In terms of biological role, may function to promote vesicle trafficking and/or fusion. May also regulate apoptosis. The sequence is that of AKT-interacting protein (aktip) from Xenopus tropicalis (Western clawed frog).